Here is a 406-residue protein sequence, read N- to C-terminus: Elongation factor Tu (406 aa).

The tr-type G domain occupies 10 to 215 (KPHVNVGTIG…AIDEYIPTPV (206 aa)). Residues 19–26 (GHVDHGKT) are G1. Residue 19–26 (GHVDHGKT) coordinates GTP. Mg(2+) is bound at residue Thr-26. The G2 stretch occupies residues 61–65 (GITIN). Positions 82–85 (DCPG) are G3. GTP-binding positions include 82-86 (DCPGH) and 137-140 (NKVD). The tract at residues 137–140 (NKVD) is G4. The tract at residues 175–177 (SAL) is G5.

It belongs to the TRAFAC class translation factor GTPase superfamily. Classic translation factor GTPase family. EF-Tu/EF-1A subfamily. In terms of assembly, monomer.

The protein resides in the cytoplasm. The catalysed reaction is GTP + H2O = GDP + phosphate + H(+). Its function is as follows. GTP hydrolase that promotes the GTP-dependent binding of aminoacyl-tRNA to the A-site of ribosomes during protein biosynthesis. The chain is Elongation factor Tu from Thermus aquaticus.